The following is a 368-amino-acid chain: Putative transport protein bbp_117 (368 aa).

Transmembrane regions (helical) follow at residues 13–35, 39–61, 68–90, 159–181, 216–238, 248–270, 277–299, and 314–336; these read VIFS…RPFF, AWAS…LLWG, VMMT…NSLI, HFGR…YWNG, LGVV…ISGI, IIIF…IWLY, WGTV…RPIL, and GVIG…VLII.

This sequence belongs to the autoinducer-2 exporter (AI-2E) (TC 2.A.86) family.

The protein localises to the cell membrane. The polypeptide is Putative transport protein bbp_117 (Buchnera aphidicola subsp. Baizongia pistaciae (strain Bp)).